The chain runs to 340 residues: tRNA N6-adenosine threonylcarbamoyltransferase (340 aa).

Residues His113 and His117 each coordinate Fe cation. Residues 135-139 (LVSGG), Asp169, Gly182, Asp186, and Asn274 each bind substrate. Position 302 (Asp302) interacts with Fe cation.

The protein belongs to the KAE1 / TsaD family. Fe(2+) is required as a cofactor.

The protein localises to the cytoplasm. The catalysed reaction is L-threonylcarbamoyladenylate + adenosine(37) in tRNA = N(6)-L-threonylcarbamoyladenosine(37) in tRNA + AMP + H(+). Its function is as follows. Required for the formation of a threonylcarbamoyl group on adenosine at position 37 (t(6)A37) in tRNAs that read codons beginning with adenine. Is involved in the transfer of the threonylcarbamoyl moiety of threonylcarbamoyl-AMP (TC-AMP) to the N6 group of A37, together with TsaE and TsaB. TsaD likely plays a direct catalytic role in this reaction. The sequence is that of tRNA N6-adenosine threonylcarbamoyltransferase from Mycolicibacterium gilvum (strain PYR-GCK) (Mycobacterium gilvum (strain PYR-GCK)).